A 109-amino-acid chain; its full sequence is Nucleoid-associated protein ECA1177 (109 aa).

It belongs to the YbaB/EbfC family. In terms of assembly, homodimer.

The protein resides in the cytoplasm. It localises to the nucleoid. In terms of biological role, binds to DNA and alters its conformation. May be involved in regulation of gene expression, nucleoid organization and DNA protection. The chain is Nucleoid-associated protein ECA1177 from Pectobacterium atrosepticum (strain SCRI 1043 / ATCC BAA-672) (Erwinia carotovora subsp. atroseptica).